The primary structure comprises 376 residues: Chorismate synthase (376 aa).

NADP(+)-binding residues include R39 and R45. FMN contacts are provided by residues 115–117 (RSS), G276, 291–295 (KPIPT), and R317.

It belongs to the chorismate synthase family. In terms of assembly, homotetramer. FMNH2 serves as cofactor.

The enzyme catalyses 5-O-(1-carboxyvinyl)-3-phosphoshikimate = chorismate + phosphate. The protein operates within metabolic intermediate biosynthesis; chorismate biosynthesis; chorismate from D-erythrose 4-phosphate and phosphoenolpyruvate: step 7/7. Its function is as follows. Catalyzes the anti-1,4-elimination of the C-3 phosphate and the C-6 proR hydrogen from 5-enolpyruvylshikimate-3-phosphate (EPSP) to yield chorismate, which is the branch point compound that serves as the starting substrate for the three terminal pathways of aromatic amino acid biosynthesis. This reaction introduces a second double bond into the aromatic ring system. The chain is Chorismate synthase from Thermotoga sp. (strain RQ2).